Consider the following 498-residue polypeptide: Acetyl-coenzyme A carboxylase carboxyl transferase subunit beta, chloroplastic (498 aa).

The CoA carboxyltransferase N-terminal domain occupies 228 to 498 (LWVQCEICYG…LNHNLSRTLT (271 aa)). Zn(2+) contacts are provided by Cys-232, Cys-235, Cys-251, and Cys-254. The C4-type zinc-finger motif lies at 232 to 254 (CEICYGLNYKKFFKSKMNICEQC).

This sequence belongs to the AccD/PCCB family. As to quaternary structure, acetyl-CoA carboxylase is a heterohexamer composed of biotin carboxyl carrier protein, biotin carboxylase and 2 subunits each of ACCase subunit alpha and ACCase plastid-coded subunit beta (accD). Zn(2+) serves as cofactor.

Its subcellular location is the plastid. The protein resides in the chloroplast stroma. The catalysed reaction is N(6)-carboxybiotinyl-L-lysyl-[protein] + acetyl-CoA = N(6)-biotinyl-L-lysyl-[protein] + malonyl-CoA. The protein operates within lipid metabolism; malonyl-CoA biosynthesis; malonyl-CoA from acetyl-CoA: step 1/1. Functionally, component of the acetyl coenzyme A carboxylase (ACC) complex. Biotin carboxylase (BC) catalyzes the carboxylation of biotin on its carrier protein (BCCP) and then the CO(2) group is transferred by the transcarboxylase to acetyl-CoA to form malonyl-CoA. The polypeptide is Acetyl-coenzyme A carboxylase carboxyl transferase subunit beta, chloroplastic (Populus trichocarpa (Western balsam poplar)).